We begin with the raw amino-acid sequence, 354 residues long: MIELIGHETPVPSQQQHTGGVRGTSACTPPGVGERTTVLYCPPPPPERPEVAAEINRRVVVWMQGLGLGGEDNVAGVYKHDPGRGITLCHPGSQDVERMTAAGKMIVAETAVDDYFCETNSRRDANDQTIGPNLSLAQSAIDAPRLTPDLQALWNKCRDDHPVLRAQHEAFGDLERISSPAQAQRVRHDIAQLYLGYNAENGWRLLNRLPPVWQYLANRQMNSFRPCLNLTDALDGYELAPQLYAHPLVQDCTARATLIATLYNDLASCEREIREHGLPFNLPAVIAAEERIALDEAFVRACEIHNELIQALEEATGHAASALADPALSRYLTGLWSWLAGSRHWHFTTARHRA.

The disordered stretch occupies residues 1–29; that stretch reads MIELIGHETPVPSQQQHTGGVRGTSACTP. Positions 113, 114, 118, 264, 268, and 272 each coordinate Mg(2+).

It belongs to the terpene synthase family. 2-methylisoborneol synthase subfamily. Mg(2+) serves as cofactor.

The enzyme catalyses (E)-2-methylgeranyl diphosphate + H2O = 2-methylisoborneol + diphosphate. In terms of biological role, catalyzes the cyclization of 2-methylgeranyl diphosphate (2-MeGPP) to 2-methylisoborneol (2-MIB), which likely involves the intermediacy of 2-methyllinalyl diphosphate. The chain is 2-methylisoborneol synthase from Saccharopolyspora erythraea (strain ATCC 11635 / DSM 40517 / JCM 4748 / NBRC 13426 / NCIMB 8594 / NRRL 2338).